A 481-amino-acid chain; its full sequence is MTTANQVQPSAESAVAGRVVRVIGPVVDVEFPRGQQPALFNALTVEVDLEAVAKTITLEVAQHLGDNLVRAVSMAPTDGLIRGAEVTDTGKPISVPVGDVVKGHVFNALGDCLDEPGLGRDGEQWGIHREPPAFDQLEGKTEILETGIKVIDLLTPYVKGGKIGLFGGAGVGKTVLIQEMITRIAREFSGTSVFAGVGERTREGTDLFLEMEEMGVLQDTALVFGQMDEPPGVRMRVALSGLTMAEYFRDVQNQDVLLFIDNIFRFTQAGSEVSTLLGRMPSAVGYQPTLADEMGVLQERITSTKGRSITSLQAVYVPADDYTDPAPATTFAHLDATTELDRSIASKGIYPAVNPLTSTSRILEPGIVGERHYEVAQRVIHILQKNKELQDIIAILGMDELSEEDKITVQRARRLERFLGQNFFVAEKFTGIPGSYVPLADTIDAFERICDGEFDAYPEQAFNGLGGLDDVEAAYKKMTEK.

G167–T174 lines the ATP pocket.

This sequence belongs to the ATPase alpha/beta chains family. F-type ATPases have 2 components, CF(1) - the catalytic core - and CF(0) - the membrane proton channel. CF(1) has five subunits: alpha(3), beta(3), gamma(1), delta(1), epsilon(1). CF(0) has three main subunits: a(1), b(2) and c(9-12). The alpha and beta chains form an alternating ring which encloses part of the gamma chain. CF(1) is attached to CF(0) by a central stalk formed by the gamma and epsilon chains, while a peripheral stalk is formed by the delta and b chains.

It localises to the cell membrane. It catalyses the reaction ATP + H2O + 4 H(+)(in) = ADP + phosphate + 5 H(+)(out). Its function is as follows. Produces ATP from ADP in the presence of a proton gradient across the membrane. The catalytic sites are hosted primarily by the beta subunits. This is ATP synthase subunit beta from Corynebacterium jeikeium (strain K411).